The sequence spans 495 residues: Guanosine-5'-triphosphate,3'-diphosphate pyrophosphatase (495 aa).

The protein belongs to the GppA/Ppx family. GppA subfamily.

It catalyses the reaction guanosine 3'-diphosphate 5'-triphosphate + H2O = guanosine 3',5'-bis(diphosphate) + phosphate + H(+). Its pathway is purine metabolism; ppGpp biosynthesis; ppGpp from GTP: step 2/2. Functionally, catalyzes the conversion of pppGpp to ppGpp. Guanosine pentaphosphate (pppGpp) is a cytoplasmic signaling molecule which together with ppGpp controls the 'stringent response', an adaptive process that allows bacteria to respond to amino acid starvation, resulting in the coordinated regulation of numerous cellular activities. The chain is Guanosine-5'-triphosphate,3'-diphosphate pyrophosphatase from Enterobacter sp. (strain 638).